The chain runs to 777 residues: Subtilisin-like protease SBT3.7 (777 aa).

Residues 1-22 (MRNHRTSIFVVLSLVIILNGQS) form the signal peptide. Residues 23 to 113 (GFLPRAGAES…VIPDRFYKPA (91 aa)) constitute a propeptide, activation peptide. Residues 34 to 111 (VHIVYLGEKQ…VHVIPDRFYK (78 aa)) enclose the Inhibitor I9 domain. Positions 117–624 (TWDYLGLSPT…GGLVNPEKAT (508 aa)) constitute a Peptidase S8 domain. Asn-133 carries N-linked (GlcNAc...) asparagine glycosylation. The Charge relay system role is filled by Asp-147. N-linked (GlcNAc...) asparagine glycans are attached at residues Asn-180 and Asn-206. The active-site Charge relay system is His-222. N-linked (GlcNAc...) asparagine glycans are attached at residues Asn-237, Asn-397, Asn-412, and Asn-540. A PA domain is found at 386 to 481 (SLVYPENPGN…ELGTYILFYI (96 aa)). Residue Ser-555 is the Charge relay system of the active site. Asn-647, Asn-723, and Asn-758 each carry an N-linked (GlcNAc...) asparagine glycan.

The protein belongs to the peptidase S8 family.

It is found in the secreted. The chain is Subtilisin-like protease SBT3.7 from Arabidopsis thaliana (Mouse-ear cress).